The following is a 363-amino-acid chain: Alanine racemase (363 aa).

The Proton acceptor; specific for D-alanine role is filled by Lys35. Lys35 carries the post-translational modification N6-(pyridoxal phosphate)lysine. Arg134 lines the substrate pocket. Tyr259 serves as the catalytic Proton acceptor; specific for L-alanine. A substrate-binding site is contributed by Met307.

The protein belongs to the alanine racemase family. Pyridoxal 5'-phosphate is required as a cofactor.

It carries out the reaction L-alanine = D-alanine. It participates in amino-acid biosynthesis; D-alanine biosynthesis; D-alanine from L-alanine: step 1/1. In terms of biological role, catalyzes the interconversion of L-alanine and D-alanine. May also act on other amino acids. In Shewanella denitrificans (strain OS217 / ATCC BAA-1090 / DSM 15013), this protein is Alanine racemase (alr).